We begin with the raw amino-acid sequence, 167 residues long: MPGNSPHYGRWPQHDFTSLKKLRPQSVTSRIQPGSDVIVCAEMDEQWGYVGAKSRQRWLFYAYDSLRKTVVAHVFGERTMATLGRLMSLLSPFDVVIWMTDGWPLYESRLKGKLHVISKRYTQRIERHNLNLRQHLARLGRKSLSFSKSVELHDKVIGHYLNIKHYQ.

The protein belongs to the transposase 27 family.

In terms of biological role, absolutely required for transposition of IS1. The sequence is that of Insertion element IS1 1 protein InsB (insB1) from Escherichia coli (strain K12).